Consider the following 478-residue polypeptide: Probable sodium/glutamine symporter GlnT (478 aa).

10 helical membrane passes run 14–34 (DLLW…YFTF), 85–105 (IAIA…IIAI), 145–165 (WMGA…FNSV), 185–205 (LGLI…KRIA), 211–231 (IVVV…FSNI), 236–256 (GVLA…GGAL), 298–318 (AFGV…IILF), 342–362 (GSWA…CALI), 381–401 (LIFV…VAKV), and 411–431 (FMGL…KVVF).

The protein belongs to the alanine or glycine:cation symporter (AGCS) (TC 2.A.25) family.

The protein resides in the cell membrane. Its function is as follows. Probably functions as a sodium/glutamine symporter for glutamine uptake. This chain is Probable sodium/glutamine symporter GlnT (glnT), found in Bacillus subtilis (strain 168).